The primary structure comprises 55 residues: Large ribosomal subunit protein bL33 (55 aa).

Residues methionine 1 to leucine 11 show a composition bias toward basic and acidic residues. The interval methionine 1–asparagine 26 is disordered.

The protein belongs to the bacterial ribosomal protein bL33 family.

This is Large ribosomal subunit protein bL33 from Methylibium petroleiphilum (strain ATCC BAA-1232 / LMG 22953 / PM1).